Here is a 182-residue protein sequence, read N- to C-terminus: UPF0398 protein RBAM_020340 (182 aa).

It belongs to the UPF0398 family.

This is UPF0398 protein RBAM_020340 from Bacillus velezensis (strain DSM 23117 / BGSC 10A6 / LMG 26770 / FZB42) (Bacillus amyloliquefaciens subsp. plantarum).